A 38-amino-acid polypeptide reads, in one-letter code: Photosystem II reaction center protein L (38 aa).

A helical membrane pass occupies residues 17 to 37 (SLYWGLLLIFVLAVLFSSYIF).

It belongs to the PsbL family. PSII is composed of 1 copy each of membrane proteins PsbA, PsbB, PsbC, PsbD, PsbE, PsbF, PsbH, PsbI, PsbJ, PsbK, PsbL, PsbM, PsbT, PsbX, PsbY, PsbZ, Psb30/Ycf12, at least 3 peripheral proteins of the oxygen-evolving complex and a large number of cofactors. It forms dimeric complexes.

The protein resides in the plastid. It is found in the chloroplast thylakoid membrane. One of the components of the core complex of photosystem II (PSII). PSII is a light-driven water:plastoquinone oxidoreductase that uses light energy to abstract electrons from H(2)O, generating O(2) and a proton gradient subsequently used for ATP formation. It consists of a core antenna complex that captures photons, and an electron transfer chain that converts photonic excitation into a charge separation. This subunit is found at the monomer-monomer interface and is required for correct PSII assembly and/or dimerization. The sequence is that of Photosystem II reaction center protein L from Tetradesmus obliquus (Green alga).